The sequence spans 491 residues: Angiopoietin-related protein 1 (491 aa).

Positions 1-23 (MKTFTWTLGVLFFLLVDTGHCRG) are cleaved as a signal peptide. Positions 80–168 (ITRMDLENLK…LNVTTEMLKM (89 aa)) form a coiled coil. 2 N-linked (GlcNAc...) asparagine glycosylation sites follow: Asn-160 and Asn-188. In terms of domain architecture, Fibrinogen C-terminal spans 271–491 (FINEGPFKDC…AVQMMIKPID (221 aa)). 2 disulfides stabilise this stretch: Cys-280–Cys-309 and Cys-432–Cys-445.

As to expression, highly expressed in adrenal gland, placenta, thyroid gland, heart, skeletal muscle and small intestine. Weakly expressed in testis, ovary, colon, pancreas, kidney and stomach.

The protein resides in the secreted. The protein is Angiopoietin-related protein 1 (ANGPTL1) of Homo sapiens (Human).